The chain runs to 461 residues: UDP-N-acetylmuramoylalanine--D-glutamate ligase (461 aa).

115–121 is an ATP binding site; the sequence is GSNGKTT.

It belongs to the MurCDEF family.

The protein localises to the cytoplasm. It carries out the reaction UDP-N-acetyl-alpha-D-muramoyl-L-alanine + D-glutamate + ATP = UDP-N-acetyl-alpha-D-muramoyl-L-alanyl-D-glutamate + ADP + phosphate + H(+). The protein operates within cell wall biogenesis; peptidoglycan biosynthesis. In terms of biological role, cell wall formation. Catalyzes the addition of glutamate to the nucleotide precursor UDP-N-acetylmuramoyl-L-alanine (UMA). In Acidobacterium capsulatum (strain ATCC 51196 / DSM 11244 / BCRC 80197 / JCM 7670 / NBRC 15755 / NCIMB 13165 / 161), this protein is UDP-N-acetylmuramoylalanine--D-glutamate ligase.